The chain runs to 158 residues: Glutathione peroxidase-like peroxiredoxin gpx1 (158 aa).

The active-site Cysteine sulfenic acid (-SOH) intermediate is the cysteine 36. Cysteine 36 and cysteine 82 are joined by a disulfide.

Belongs to the glutathione peroxidase family. As to quaternary structure, monomer.

It is found in the cytoplasm. It localises to the mitochondrion. The enzyme catalyses a hydroperoxide + [thioredoxin]-dithiol = an alcohol + [thioredoxin]-disulfide + H2O. Its function is as follows. Glutathione peroxidase-like protein that protects cells during oxidative stress. Has peroxidase activity reducing hydrogen peroxide, alkyl and phospholipid hydroperoxides using preferentially thioredoxin as a reducing power. May act as a scavenger of H(2)O(2). This chain is Glutathione peroxidase-like peroxiredoxin gpx1, found in Schizosaccharomyces pombe (strain 972 / ATCC 24843) (Fission yeast).